The following is a 188-amino-acid chain: MNKEGRAIHSLLVTGYKAHELGIFQESHQGVHYLKKTIENRLRPFIEEGTEWIITSGQLGVEQWAADVVFSLKETAYPHIKLAILPPFEGQEANWSQAAQERYAARLAMADFVECISKRPYEHVGQLRQKNDFLVQRTDGLLVLYDEEKQGSPLYYIASAKAQGKPIFYISPEEVEETVRQDQYDDFL.

Belongs to the UPF0398 family.

This is UPF0398 protein ABC2016 from Shouchella clausii (strain KSM-K16) (Alkalihalobacillus clausii).